The sequence spans 375 residues: Alcohol dehydrogenase 1 (375 aa).

Residue serine 2 is modified to N-acetylserine. Zn(2+)-binding residues include cysteine 47, histidine 68, cysteine 98, cysteine 101, cysteine 104, cysteine 112, and cysteine 175. NAD(+)-binding positions include 200-205 (GLGGVG), aspartate 224, and lysine 229. Lysine 234 bears the N6-succinyllysine mark. 293–295 (VGV) provides a ligand contact to NAD(+). Residue lysine 340 is modified to N6-succinyllysine. Arginine 370 is a binding site for NAD(+).

It belongs to the zinc-containing alcohol dehydrogenase family. As to quaternary structure, homodimer. Zn(2+) serves as cofactor.

Its subcellular location is the cytoplasm. The enzyme catalyses a primary alcohol + NAD(+) = an aldehyde + NADH + H(+). It catalyses the reaction a secondary alcohol + NAD(+) = a ketone + NADH + H(+). This is Alcohol dehydrogenase 1 (ADH1) from Oryctolagus cuniculus (Rabbit).